The sequence spans 126 residues: Protein ApaG (126 aa).

The region spanning 2 to 126 (SDPRYQVDVS…FRLAVPGALH (125 aa)) is the ApaG domain.

This chain is Protein ApaG, found in Pseudomonas fluorescens (strain Pf0-1).